The primary structure comprises 551 residues: CTP synthase (551 aa).

An amidoligase domain region spans residues 1–273 (MKNTTNTKRT…DSKILELLNI (273 aa)). Ser-21 contributes to the CTP binding site. Ser-21 lines the UTP pocket. Residues 22 to 27 (SLGKGL) and Asp-79 contribute to the ATP site. The Mg(2+) site is built by Asp-79 and Glu-147. Residues 154–156 (DIE), 194–199 (KTKPTQ), and Lys-230 contribute to the CTP site. Residues 194–199 (KTKPTQ) and Lys-230 contribute to the UTP site. Residues 298–551 (TIAITGKYVD…ISAAVANKKG (254 aa)) enclose the Glutamine amidotransferase type-1 domain. Gly-360 is an L-glutamine binding site. Catalysis depends on Cys-387, which acts as the Nucleophile; for glutamine hydrolysis. L-glutamine contacts are provided by residues 388-391 (LGMQ), Glu-411, and Arg-479. Catalysis depends on residues His-524 and Glu-526.

Belongs to the CTP synthase family. In terms of assembly, homotetramer.

It catalyses the reaction UTP + L-glutamine + ATP + H2O = CTP + L-glutamate + ADP + phosphate + 2 H(+). The catalysed reaction is L-glutamine + H2O = L-glutamate + NH4(+). The enzyme catalyses UTP + NH4(+) + ATP = CTP + ADP + phosphate + 2 H(+). It functions in the pathway pyrimidine metabolism; CTP biosynthesis via de novo pathway; CTP from UDP: step 2/2. Its activity is regulated as follows. Allosterically activated by GTP, when glutamine is the substrate; GTP has no effect on the reaction when ammonia is the substrate. The allosteric effector GTP functions by stabilizing the protein conformation that binds the tetrahedral intermediate(s) formed during glutamine hydrolysis. Inhibited by the product CTP, via allosteric rather than competitive inhibition. In terms of biological role, catalyzes the ATP-dependent amination of UTP to CTP with either L-glutamine or ammonia as the source of nitrogen. Regulates intracellular CTP levels through interactions with the four ribonucleotide triphosphates. The sequence is that of CTP synthase from Desulfotalea psychrophila (strain LSv54 / DSM 12343).